The primary structure comprises 317 residues: Cytochrome f (317 aa).

Positions 1-34 (MKGLKNQIMKKTSLFICTLLFILSIVFYPKITFA) are cleaved as a signal peptide. Residues Y35, C55, C58, and H59 each contribute to the heme site. A helical membrane pass occupies residues 284-304 (VIGLIAFFIGVGLTQILLVLK).

The protein belongs to the cytochrome f family. The 4 large subunits of the cytochrome b6-f complex are cytochrome b6, subunit IV (17 kDa polypeptide, PetD), cytochrome f and the Rieske protein, while the 4 small subunits are PetG, PetL, PetM and PetN. The complex functions as a dimer. The cofactor is heme.

The protein localises to the cellular thylakoid membrane. Component of the cytochrome b6-f complex, which mediates electron transfer between photosystem II (PSII) and photosystem I (PSI), cyclic electron flow around PSI, and state transitions. This is Cytochrome f from Prochlorococcus marinus (strain MIT 9215).